A 1317-amino-acid polypeptide reads, in one-letter code: DNA-directed RNA polymerase subunit beta' (1317 aa).

Positions 60, 62, 75, and 78 each coordinate Zn(2+). The interval 183-209 is disordered; that stretch reads ELEDEGAKSDVKRKVRDGGEREMRQLR. Aspartate 535, aspartate 537, and aspartate 539 together coordinate Mg(2+). Cysteine 890, cysteine 967, cysteine 974, and cysteine 977 together coordinate Zn(2+).

This sequence belongs to the RNA polymerase beta' chain family. In terms of assembly, the RNAP catalytic core consists of 2 alpha, 1 beta, 1 beta' and 1 omega subunit. When a sigma factor is associated with the core the holoenzyme is formed, which can initiate transcription. Requires Mg(2+) as cofactor. Zn(2+) serves as cofactor.

The enzyme catalyses RNA(n) + a ribonucleoside 5'-triphosphate = RNA(n+1) + diphosphate. DNA-dependent RNA polymerase catalyzes the transcription of DNA into RNA using the four ribonucleoside triphosphates as substrates. The polypeptide is DNA-directed RNA polymerase subunit beta' (Mycolicibacterium vanbaalenii (strain DSM 7251 / JCM 13017 / BCRC 16820 / KCTC 9966 / NRRL B-24157 / PYR-1) (Mycobacterium vanbaalenii)).